The primary structure comprises 491 residues: Bifunctional protein GlmU (491 aa).

Residues 1–238 (MTTQPAVPAA…EWEIRGVNDR (238 aa)) form a pyrophosphorylase region. UDP-N-acetyl-alpha-D-glucosamine contacts are provided by residues 14 to 17 (LAAG), Lys28, Gln81, 86 to 87 (GT), 110 to 112 (YGD), Gly149, Glu163, Asn178, and Asn236. Asp112 is a binding site for Mg(2+). Asn236 provides a ligand contact to Mg(2+). The interval 239–259 (AQLADLAAEANRRTLRRWMLA) is linker. The tract at residues 260 to 491 (GVTIADPATT…TASTDREIQP (232 aa)) is N-acetyltransferase. UDP-N-acetyl-alpha-D-glucosamine is bound by residues Arg341 and Lys359. The Proton acceptor role is filled by His371. UDP-N-acetyl-alpha-D-glucosamine-binding residues include Tyr374 and Asn385. Residues Ala388, 394–395 (NY), Ser413, and Ala431 contribute to the acetyl-CoA site. The interval 460 to 491 (AKRPGTPAAEAAQRANDESTGTTASTDREIQP) is disordered.

The protein in the N-terminal section; belongs to the N-acetylglucosamine-1-phosphate uridyltransferase family. It in the C-terminal section; belongs to the transferase hexapeptide repeat family. As to quaternary structure, homotrimer. It depends on Mg(2+) as a cofactor.

The protein resides in the cytoplasm. It catalyses the reaction alpha-D-glucosamine 1-phosphate + acetyl-CoA = N-acetyl-alpha-D-glucosamine 1-phosphate + CoA + H(+). The enzyme catalyses N-acetyl-alpha-D-glucosamine 1-phosphate + UTP + H(+) = UDP-N-acetyl-alpha-D-glucosamine + diphosphate. It participates in nucleotide-sugar biosynthesis; UDP-N-acetyl-alpha-D-glucosamine biosynthesis; N-acetyl-alpha-D-glucosamine 1-phosphate from alpha-D-glucosamine 6-phosphate (route II): step 2/2. The protein operates within nucleotide-sugar biosynthesis; UDP-N-acetyl-alpha-D-glucosamine biosynthesis; UDP-N-acetyl-alpha-D-glucosamine from N-acetyl-alpha-D-glucosamine 1-phosphate: step 1/1. It functions in the pathway bacterial outer membrane biogenesis; LPS lipid A biosynthesis. Its function is as follows. Catalyzes the last two sequential reactions in the de novo biosynthetic pathway for UDP-N-acetylglucosamine (UDP-GlcNAc). The C-terminal domain catalyzes the transfer of acetyl group from acetyl coenzyme A to glucosamine-1-phosphate (GlcN-1-P) to produce N-acetylglucosamine-1-phosphate (GlcNAc-1-P), which is converted into UDP-GlcNAc by the transfer of uridine 5-monophosphate (from uridine 5-triphosphate), a reaction catalyzed by the N-terminal domain. In Kineococcus radiotolerans (strain ATCC BAA-149 / DSM 14245 / SRS30216), this protein is Bifunctional protein GlmU.